The sequence spans 115 residues: NADH-ubiquinone oxidoreductase chain 3 (115 aa).

3 helical membrane passes run 3 to 23, 55 to 75, and 84 to 104; these read LLLTLLTNTTLALLLVFIAFW, FFLVAITFLLFDLEIALLLPL, and LNTMLTMALFLISLLAASLAY.

The protein belongs to the complex I subunit 3 family. Core subunit of respiratory chain NADH dehydrogenase (Complex I) which is composed of 45 different subunits. Interacts with TMEM186. Interacts with TMEM242.

Its subcellular location is the mitochondrion inner membrane. The enzyme catalyses a ubiquinone + NADH + 5 H(+)(in) = a ubiquinol + NAD(+) + 4 H(+)(out). Functionally, core subunit of the mitochondrial membrane respiratory chain NADH dehydrogenase (Complex I) which catalyzes electron transfer from NADH through the respiratory chain, using ubiquinone as an electron acceptor. Essential for the catalytic activity of complex I. This Balaenoptera musculus (Blue whale) protein is NADH-ubiquinone oxidoreductase chain 3.